The sequence spans 342 residues: Arrestin domain-containing protein 5 (342 aa).

The protein belongs to the arrestin family. Testis-enriched.

Its subcellular location is the membrane. Plays an essential role in spermatogenesis. May be involved in the anchoring of the sperm head to the tail during spermatogenesis by affecting SEC22A-mediated SUN5 and NDC1 transport and localization. The polypeptide is Arrestin domain-containing protein 5 (ARRDC5) (Homo sapiens (Human)).